The primary structure comprises 423 residues: Adenylosuccinate synthetase (423 aa).

GTP is bound by residues 11–17 (GDEGKGK) and 39–41 (GHT). Asp-12 acts as the Proton acceptor in catalysis. Asp-12 and Gly-39 together coordinate Mg(2+). IMP is bound by residues 12 to 15 (DEGK), 37 to 40 (NAGH), Thr-129, Arg-143, Asn-219, Thr-234, and Arg-298. His-40 acts as the Proton donor in catalysis. Position 294-300 (294-300 (VTTGRRR)) interacts with substrate. GTP contacts are provided by residues Arg-300, 326–328 (KLD), and 411–413 (GTG).

This sequence belongs to the adenylosuccinate synthetase family. Homodimer. The cofactor is Mg(2+).

Its subcellular location is the cytoplasm. The catalysed reaction is IMP + L-aspartate + GTP = N(6)-(1,2-dicarboxyethyl)-AMP + GDP + phosphate + 2 H(+). The protein operates within purine metabolism; AMP biosynthesis via de novo pathway; AMP from IMP: step 1/2. Functionally, plays an important role in the de novo pathway and in the salvage pathway of purine nucleotide biosynthesis. Catalyzes the first committed step in the biosynthesis of AMP from IMP. The protein is Adenylosuccinate synthetase of Penicillium rubens (strain ATCC 28089 / DSM 1075 / NRRL 1951 / Wisconsin 54-1255) (Penicillium chrysogenum).